We begin with the raw amino-acid sequence, 191 residues long: Protein Ves (191 aa).

This sequence belongs to the Ves family.

The sequence is that of Protein Ves from Shigella boydii serotype 18 (strain CDC 3083-94 / BS512).